The chain runs to 334 residues: Porphobilinogen deaminase (334 aa).

Residue C258 is modified to S-(dipyrrolylmethanemethyl)cysteine.

Belongs to the HMBS family. In terms of assembly, monomer. The cofactor is dipyrromethane.

The enzyme catalyses 4 porphobilinogen + H2O = hydroxymethylbilane + 4 NH4(+). It functions in the pathway porphyrin-containing compound metabolism; protoporphyrin-IX biosynthesis; coproporphyrinogen-III from 5-aminolevulinate: step 2/4. Its function is as follows. Tetrapolymerization of the monopyrrole PBG into the hydroxymethylbilane pre-uroporphyrinogen in several discrete steps. The chain is Porphobilinogen deaminase from Ralstonia nicotianae (strain ATCC BAA-1114 / GMI1000) (Ralstonia solanacearum).